Here is a 382-residue protein sequence, read N- to C-terminus: Dual-specificity RNA methyltransferase RlmN (382 aa).

Residue Glu91 is the Proton acceptor of the active site. A Radical SAM core domain is found at 97–339; sequence EEDRGTLCIS…TTIRKTRGDD (243 aa). Residues Cys104 and Cys344 are joined by a disulfide bond. Residues Cys111, Cys115, and Cys118 each contribute to the [4Fe-4S] cluster site. S-adenosyl-L-methionine-binding positions include 165–166, Ser197, 219–221, and Asn301; these read GE and SLH. Cys344 (S-methylcysteine intermediate) is an active-site residue.

Belongs to the radical SAM superfamily. RlmN family. Requires [4Fe-4S] cluster as cofactor.

The protein localises to the cytoplasm. It carries out the reaction adenosine(2503) in 23S rRNA + 2 reduced [2Fe-2S]-[ferredoxin] + 2 S-adenosyl-L-methionine = 2-methyladenosine(2503) in 23S rRNA + 5'-deoxyadenosine + L-methionine + 2 oxidized [2Fe-2S]-[ferredoxin] + S-adenosyl-L-homocysteine. It catalyses the reaction adenosine(37) in tRNA + 2 reduced [2Fe-2S]-[ferredoxin] + 2 S-adenosyl-L-methionine = 2-methyladenosine(37) in tRNA + 5'-deoxyadenosine + L-methionine + 2 oxidized [2Fe-2S]-[ferredoxin] + S-adenosyl-L-homocysteine. Its function is as follows. Specifically methylates position 2 of adenine 2503 in 23S rRNA and position 2 of adenine 37 in tRNAs. m2A2503 modification seems to play a crucial role in the proofreading step occurring at the peptidyl transferase center and thus would serve to optimize ribosomal fidelity. The protein is Dual-specificity RNA methyltransferase RlmN of Albidiferax ferrireducens (strain ATCC BAA-621 / DSM 15236 / T118) (Rhodoferax ferrireducens).